Here is an 88-residue protein sequence, read N- to C-terminus: MANTTSAKKATRKIARRTAVNKARRSRVRTFVRQVEEAIASGDQAAAAAALKAAQPELMRAATKGVVHANTASRKVSRLAQRVKALSA.

A disordered region spans residues 1–21 (MANTTSAKKATRKIARRTAVN).

The protein belongs to the bacterial ribosomal protein bS20 family.

Its function is as follows. Binds directly to 16S ribosomal RNA. The polypeptide is Small ribosomal subunit protein bS20 (Sinorhizobium fredii (strain NBRC 101917 / NGR234)).